Reading from the N-terminus, the 359-residue chain is Lipopolysaccharide 1,6-galactosyltransferase (359 aa).

UDP contacts are provided by glutamine 242 and glutamate 274.

It belongs to the glycosyltransferase group 1 family. Glycosyltransferase 4 subfamily.

The enzyme catalyses alpha-D-Glc-(1-&gt;3)-[L-alpha-D-Hep-(1-&gt;7)]-4-O-PO3(2-)-L-alpha-D-Hep-(1-&gt;3)-4-O-PO3(2-)-L-alpha-D-Hep-(1-&gt;5)-[alpha-Kdo-(2-&gt;4)]-alpha-Kdo-(2-&gt;6)-lipid A + UDP-alpha-D-galactose = alpha-D-Gal-(1-&gt;6)-alpha-D-Glc-(1-&gt;3)-[L-alpha-D-Hep-(1-&gt;7)]-4-O-PO3(2-)-L-alpha-D-Hep-(1-&gt;3)-4-O-PO3(2-)-L-alpha-D-Hep-(1-&gt;5)-[alpha-Kdo-(2-&gt;4)]-alpha-Kdo-(2-&gt;6)-lipid A + UDP + H(+). It functions in the pathway bacterial outer membrane biogenesis; LPS core biosynthesis. Functionally, galactosyltransferase involved in the biosynthesis of the core oligosaccharide region of lipopolysaccharide (LPS). Catalyzes the addition of galactose from UDP-galactose to the first glucose residue of the LPS outer core. Cannot use other sugar donors, such as UDP-glucose, UDP-glucuronic acid, UDP-galacuronic acid, GDP-mannose, ADP-glucose and GDP-glucose. In the absence of a lipid acceptor, can hydrolyze UDP-galactose to UDP and galactose. This is Lipopolysaccharide 1,6-galactosyltransferase from Escherichia coli (strain K12).